A 469-amino-acid polypeptide reads, in one-letter code: Transcription factor SOX-10 (469 aa).

Disordered regions lie at residues 1–70 (MAEE…DDDK), 163–203 (LRMQ…QGGA), 215–278 (LDHR…DFGN), 357–378 (AQVK…QPST), and 436–469 (RPLY…LSRP). Positions 23 to 32 (LSPGSAPSLG) are enriched in low complexity. Ser24 is modified (phosphoserine). Residues 33-44 (PDGGGGGGGGSG) are compositionally biased toward gly residues. The tract at residues 65-105 (EADDDKFPVCIREAVSQVLSGYDWTLVPMPVRVNGASKSKP) is dimerization (DIM). The HMG box DNA-binding region spans 107 to 175 (VKRPMNAFMV…QHKKDHPDYK (69 aa)). Basic and acidic residues-rich tracts occupy residues 163–176 (LRMQ…DYKY) and 257–274 (ADPK…KPHI). The transactivation domain (TAM) stretch occupies residues 231–313 (PEHPSGQSHG…LPPNGHPGHV (83 aa)). A transactivation domain (TAC) region spans residues 356 to 469 (KAQVKTETAG…QPVYTTLSRP (114 aa)). A compositionally biased stretch (polar residues) spans 443–469 (SDPSPSGPQSHSPTHWEQPVYTTLSRP).

As to quaternary structure, monomer. Interacts with ARMCX3 at the mitochondrial outer membrane surface. Interacts with PAX3.

The protein localises to the cytoplasm. It localises to the nucleus. The protein resides in the mitochondrion outer membrane. Its function is as follows. Transcription factor that plays a central role in developing and mature glia. Specifically activates expression of myelin genes, during oligodendrocyte (OL) maturation, such as DUSP15 and MYRF, thereby playing a central role in oligodendrocyte maturation and CNS myelination. Once induced, MYRF cooperates with SOX10 to implement the myelination program. Transcriptional activator of MITF, acting synergistically with PAX3. Transcriptional activator of MBP, via binding to the gene promoter. This is Transcription factor SOX-10 (SOX10) from Sus scrofa (Pig).